The sequence spans 359 residues: Peptide chain release factor 1 (359 aa).

At glutamine 236 the chain carries N5-methylglutamine.

It belongs to the prokaryotic/mitochondrial release factor family. Methylated by PrmC. Methylation increases the termination efficiency of RF1.

Its subcellular location is the cytoplasm. Functionally, peptide chain release factor 1 directs the termination of translation in response to the peptide chain termination codons UAG and UAA. The polypeptide is Peptide chain release factor 1 (Streptococcus pneumoniae (strain Hungary19A-6)).